Consider the following 325-residue polypeptide: Secreted frizzled-related protein 3 (325 aa).

The signal sequence occupies residues 1–32 (MVCGSPGGMLLLRAGLLALAALCLLRVPGARA). Residues 33 to 150 (AACEPVRIPL…VYDRGVCISP (118 aa)) enclose the FZ domain. 5 cysteine pairs are disulfide-bonded: cysteine 35–cysteine 96, cysteine 43–cysteine 89, cysteine 80–cysteine 119, cysteine 108–cysteine 147, and cysteine 112–cysteine 136. Asparagine 49 carries an N-linked (GlcNAc...) asparagine glycan. Residues 178-298 (CKCKPIRATQ…WDMKLRHLGL (121 aa)) form the NTR domain. Residues 297-325 (GLSKSDSSNSDSTQSQKSGRNSNPRQARN) are disordered. Over residues 299-314 (SKSDSSNSDSTQSQKS) the composition is skewed to low complexity. Over residues 315–325 (GRNSNPRQARN) the composition is skewed to polar residues.

It belongs to the secreted frizzled-related protein (sFRP) family. Interacts with MYOC. Expressed primarily in the cartilaginous cores of the long bone during embryonic and fetal development and in the appendicular skeleton (6-13 weeks). At 13 weeks of gestation, transcripts were present in early chondroblasts of the tarsal bones of the foot, the carpal bones of the hands and the epiphysis of long bones. Highly expressed in placenta and heart, followed by brain, skeletal muscle, kidney and pancreas. Weakly expressed in lung and liver.

The protein localises to the secreted. In terms of biological role, soluble frizzled-related proteins (sFRPS) function as modulators of Wnt signaling through direct interaction with Wnts. They have a role in regulating cell growth and differentiation in specific cell types. SFRP3/FRZB appears to be involved in limb skeletogenesis. Antagonist of Wnt8 signaling. Regulates chondrocyte maturation and long bone development. The sequence is that of Secreted frizzled-related protein 3 (FRZB) from Homo sapiens (Human).